Consider the following 81-residue polypeptide: Antitoxin MT2731 (81 aa).

Antitoxin component of a type II toxin-antitoxin (TA) system. Neutralizes the effect of cognate toxin MT2730. This chain is Antitoxin MT2731, found in Mycobacterium tuberculosis (strain CDC 1551 / Oshkosh).